Consider the following 135-residue polypeptide: ATP synthase epsilon chain (135 aa).

This sequence belongs to the ATPase epsilon chain family. F-type ATPases have 2 components, CF(1) - the catalytic core - and CF(0) - the membrane proton channel. CF(1) has five subunits: alpha(3), beta(3), gamma(1), delta(1), epsilon(1). CF(0) has three main subunits: a, b and c.

The protein resides in the cell inner membrane. Its function is as follows. Produces ATP from ADP in the presence of a proton gradient across the membrane. This chain is ATP synthase epsilon chain, found in Brucella anthropi (strain ATCC 49188 / DSM 6882 / CCUG 24695 / JCM 21032 / LMG 3331 / NBRC 15819 / NCTC 12168 / Alc 37) (Ochrobactrum anthropi).